Reading from the N-terminus, the 285-residue chain is Urease accessory protein UreD (285 aa).

It belongs to the UreD family. As to quaternary structure, ureD, UreF and UreG form a complex that acts as a GTP-hydrolysis-dependent molecular chaperone, activating the urease apoprotein by helping to assemble the nickel containing metallocenter of UreC. The UreE protein probably delivers the nickel.

It localises to the cytoplasm. Functionally, required for maturation of urease via the functional incorporation of the urease nickel metallocenter. The protein is Urease accessory protein UreD of Methylobacillus flagellatus (strain ATCC 51484 / DSM 6875 / VKM B-1610 / KT).